A 337-amino-acid chain; its full sequence is Serpentine receptor class delta-18 (337 aa).

6 consecutive transmembrane segments (helical) span residues 2-22 (IIFF…LNLL), 90-110 (VGLS…LLSF), 130-150 (LILV…TIFA), 187-207 (IYSI…IFIL), 236-256 (ALTI…FYFL), and 270-290 (SIYA…LYFV).

It belongs to the nematode receptor-like protein srd family.

The protein resides in the membrane. This is Serpentine receptor class delta-18 (srd-18) from Caenorhabditis elegans.